Reading from the N-terminus, the 326-residue chain is DNA-directed RNA polymerase subunit alpha (326 aa).

Positions 1–231 are alpha N-terminal domain (alpha-NTD); sequence MQTNLLKPKI…DQLVVFAALE (231 aa). The tract at residues 247–326 is alpha C-terminal domain (alpha-CTD); sequence VDPMLMRPVD…ESWPPANLEK (80 aa).

Belongs to the RNA polymerase alpha chain family. In terms of assembly, homodimer. The RNAP catalytic core consists of 2 alpha, 1 beta, 1 beta' and 1 omega subunit. When a sigma factor is associated with the core the holoenzyme is formed, which can initiate transcription.

It carries out the reaction RNA(n) + a ribonucleoside 5'-triphosphate = RNA(n+1) + diphosphate. Its function is as follows. DNA-dependent RNA polymerase catalyzes the transcription of DNA into RNA using the four ribonucleoside triphosphates as substrates. This chain is DNA-directed RNA polymerase subunit alpha, found in Polynucleobacter necessarius subsp. necessarius (strain STIR1).